Consider the following 707-residue polypeptide: Anaerobic ribonucleoside-triphosphate reductase (707 aa).

The region spanning 4–95 (FGVIKRDGSR…EYRHDRDLAR (92 aa)) is the ATP-cone domain. A Glycine radical domain is found at 584 to 707 (KKVNPYDKLD…EEVKRRVKHL (124 aa)). Zn(2+) contacts are provided by Cys-645, Cys-648, Cys-663, and Cys-666. At Gly-682 the chain carries Glycine radical.

It belongs to the anaerobic ribonucleoside-triphosphate reductase family. In terms of assembly, forms a tetramer composed of two NrdD and two NrdG subunits.

It catalyses the reaction a ribonucleoside 5'-triphosphate + formate + H(+) = a 2'-deoxyribonucleoside 5'-triphosphate + CO2 + H2O. Its activity is regulated as follows. Activated under anaerobic conditions by NrdG, a tightly associated activase. Activation involves the formation of a glycyl radical at Gly-682. Its function is as follows. Catalyzes the conversion of ribonucleotides into deoxyribonucleotides, which are required for DNA synthesis and repair. This chain is Anaerobic ribonucleoside-triphosphate reductase (nrdD), found in Haemophilus influenzae (strain ATCC 51907 / DSM 11121 / KW20 / Rd).